Reading from the N-terminus, the 187-residue chain is Fibroblast growth factor 4A (187 aa).

The signal sequence occupies residues Met1 to Cys22.

The protein belongs to the heparin-binding growth factors family.

It is found in the secreted. Plays an important role in the regulation of embryonic development, cell proliferation, and cell differentiation. Good candidate for an inducing factor with possible roles both in mesoderm induction at the blastula stage and in the formation of the anteroposterior axis at the gastrula stage. This is Fibroblast growth factor 4A (fgf4-a) from Xenopus laevis (African clawed frog).